The sequence spans 546 residues: Chaperonin GroEL 3 (546 aa).

Residues 30-33 (TLGP), lysine 51, 87-91 (DGTTT), glycine 415, and aspartate 496 contribute to the ATP site.

This sequence belongs to the chaperonin (HSP60) family. Forms a cylinder of 14 subunits composed of two heptameric rings stacked back-to-back. Interacts with the co-chaperonin GroES.

It is found in the cytoplasm. It carries out the reaction ATP + H2O + a folded polypeptide = ADP + phosphate + an unfolded polypeptide.. In terms of biological role, together with its co-chaperonin GroES, plays an essential role in assisting protein folding. The GroEL-GroES system forms a nano-cage that allows encapsulation of the non-native substrate proteins and provides a physical environment optimized to promote and accelerate protein folding. The sequence is that of Chaperonin GroEL 3 from Bradyrhizobium diazoefficiens (strain JCM 10833 / BCRC 13528 / IAM 13628 / NBRC 14792 / USDA 110).